The chain runs to 195 residues: Putative manganese efflux pump MntP (195 aa).

The next 6 helical transmembrane spans lie at 3–23 (LSAT…ASVG), 40–60 (GLIF…LGLL), 68–88 (WDHW…VLAG), 106–126 (VLIA…VGLA), 132–152 (ILHA…IGML), and 165–185 (AEII…YSHI).

Belongs to the MntP (TC 9.B.29) family.

It is found in the cell inner membrane. Probably functions as a manganese efflux pump. In Sodalis glossinidius (strain morsitans), this protein is Putative manganese efflux pump MntP.